The chain runs to 350 residues: Probable poly-beta-1,6-N-acetyl-D-glucosamine export protein (350 aa).

The next 10 membrane-spanning stretches (helical) occupy residues 7–29, 44–66, 79–101, 116–138, 145–167, 187–204, 211–233, 243–262, 269–291, and 306–328; these read ELVYLRAIICAIIIVTHLLTQIT, FYIRNIVIFGTPCFIILSQLLTT, TRVKYILIPYILMGLFYSYSESL, LLGQWYGYFIVVIMQFFILSYII, LFNSKILLLLSFILQQSFLYYFT, IIFGWIFYFFLGAYMGYN, FLERYLVIMIVLAVATYFVFIAL, SFSYSLTPYNSIMFIVILGI, MLFNTIQMISAFSFFIYLLHPII, and TMVFLAISLLFILGLCIGVGMIL.

Belongs to the acyltransferase 3 family.

The protein resides in the cell membrane. Presumably involved in the export of the biofilm adhesin polysaccharide poly-beta-1,6-N-acetyl-D-glucosamine (PNAG, also referred to as PIA) across the cell membrane. The chain is Probable poly-beta-1,6-N-acetyl-D-glucosamine export protein (icaC) from Staphylococcus aureus (strain MRSA252).